Consider the following 229-residue polypeptide: UPF0173 metal-dependent hydrolase SAR1785 (229 aa).

Belongs to the UPF0173 family.

The chain is UPF0173 metal-dependent hydrolase SAR1785 from Staphylococcus aureus (strain MRSA252).